The chain runs to 420 residues: 4-hydroxy-3-methylbut-2-en-1-yl diphosphate synthase (flavodoxin) (420 aa).

[4Fe-4S] cluster-binding residues include C307, C310, C353, and E360.

The protein belongs to the IspG family. [4Fe-4S] cluster serves as cofactor.

The catalysed reaction is (2E)-4-hydroxy-3-methylbut-2-enyl diphosphate + oxidized [flavodoxin] + H2O + 2 H(+) = 2-C-methyl-D-erythritol 2,4-cyclic diphosphate + reduced [flavodoxin]. It functions in the pathway isoprenoid biosynthesis; isopentenyl diphosphate biosynthesis via DXP pathway; isopentenyl diphosphate from 1-deoxy-D-xylulose 5-phosphate: step 5/6. In terms of biological role, converts 2C-methyl-D-erythritol 2,4-cyclodiphosphate (ME-2,4cPP) into 1-hydroxy-2-methyl-2-(E)-butenyl 4-diphosphate. The sequence is that of 4-hydroxy-3-methylbut-2-en-1-yl diphosphate synthase (flavodoxin) from Brucella abortus (strain S19).